A 728-amino-acid chain; its full sequence is 1,4-alpha-glucan branching enzyme GlgB (728 aa).

Residue aspartate 405 is the Nucleophile of the active site. The Proton donor role is filled by glutamate 458.

The protein belongs to the glycosyl hydrolase 13 family. GlgB subfamily. Monomer.

The enzyme catalyses Transfers a segment of a (1-&gt;4)-alpha-D-glucan chain to a primary hydroxy group in a similar glucan chain.. It functions in the pathway glycan biosynthesis; glycogen biosynthesis. Its function is as follows. Catalyzes the formation of the alpha-1,6-glucosidic linkages in glycogen by scission of a 1,4-alpha-linked oligosaccharide from growing alpha-1,4-glucan chains and the subsequent attachment of the oligosaccharide to the alpha-1,6 position. In Serratia proteamaculans (strain 568), this protein is 1,4-alpha-glucan branching enzyme GlgB.